A 330-amino-acid chain; its full sequence is Putative heme-binding peroxidase (330 aa).

His38 functions as the Proton acceptor in the catalytic mechanism. His162 contacts heme b. The Tryptophan radical intermediate role is filled by Trp178. Residues 286 to 330 (GEYKSAPQKSPVPGAPGAGKDGEANPLARQNERAHGQAQHALAKL) are disordered.

Belongs to the peroxidase family. Cytochrome c peroxidase subfamily. Requires heme b as cofactor.

Destroys radicals which are normally produced within the cells and which are toxic to biological systems. This is Putative heme-binding peroxidase (CCP2) from Mycosarcoma maydis (Corn smut fungus).